Here is a 608-residue protein sequence, read N- to C-terminus: UvrABC system protein C (608 aa).

One can recognise a GIY-YIG domain in the interval 22–100 (EKPGIYQYLN…IKKYKPRYNV (79 aa)). Positions 214–249 (QEISRLLYQRMQDLAAEMKFEEAQKVKEKYALIENY) constitute a UVR domain.

Belongs to the UvrC family. Interacts with UvrB in an incision complex.

The protein localises to the cytoplasm. The UvrABC repair system catalyzes the recognition and processing of DNA lesions. UvrC both incises the 5' and 3' sides of the lesion. The N-terminal half is responsible for the 3' incision and the C-terminal half is responsible for the 5' incision. This chain is UvrABC system protein C, found in Bacteroides fragilis (strain ATCC 25285 / DSM 2151 / CCUG 4856 / JCM 11019 / LMG 10263 / NCTC 9343 / Onslow / VPI 2553 / EN-2).